A 309-amino-acid polypeptide reads, in one-letter code: Uricase-2 isozyme 2 (309 aa).

Residues Lys18 and Thr64 each act as charge relay system in the active site. Urate contacts are provided by Thr64, Asp65, Phe166, Arg183, Val238, Gln239, and Asn265. The active-site Charge relay system is His267.

It belongs to the uricase family. As to quaternary structure, homotetramer.

Its subcellular location is the peroxisome. It carries out the reaction urate + O2 + H2O = 5-hydroxyisourate + H2O2. It participates in purine metabolism; urate degradation; (S)-allantoin from urate: step 1/3. Its function is as follows. Catalyzes the oxidation of uric acid to 5-hydroxyisourate, which is further processed to form (S)-allantoin. In Glycine max (Soybean), this protein is Uricase-2 isozyme 2.